The sequence spans 229 residues: Interleukin-22 receptor subunit alpha-2 (229 aa).

The N-terminal stretch at 1–19 is a signal peptide; it reads MPKHCFLGLLIMLLTTATE. 2 Fibronectin type-III domains span residues 28–127 and 128–229; these read KPQK…TKLD and PPVV…VQIP. N-linked (GlcNAc...) asparagine glycosylation occurs at N54. Cystine bridges form between C76-C84 and C204-C225.

It belongs to the type II cytokine receptor family.

It localises to the secreted. Receptor for IL22. Binds to IL22, prevents interaction with the functional IL-22R complex and blocks the activity of IL22 (in vitro). May play an important role as an IL22 antagonist in the regulation of inflammatory responses. The protein is Interleukin-22 receptor subunit alpha-2 (Il22ra2) of Rattus norvegicus (Rat).